We begin with the raw amino-acid sequence, 935 residues long: MVEASEGTLEPIGAVQRTLVGREATEPMRADIRLLGAILGDTVREQNGQQVFELVERARVESFRVRRSEIDRAELARMFAGIDIHQAIPVIRAFSHFALLANVAEDIHRERRRAIHVAAGEPPQDSSLAATYAKLDRAQLDSAMVAEALRGAVVSPVITAHPTETRRRTVFVTQHRITELMRLHAEGHTETDDGRNIELELRRQVLTLWQTALIRLSRLQITDEIEVGLRYYAAAFFKVIPQVNAEVRNALRARWPGADLLDEPIVAPGSWIGGDRDGNPNVTADVVRRATGDAAYTALAHYLAELTACEQELSMSARLVAVTPELAALAEDCAEKARADEPYRRALRVIRGRLTATAAEILDRRPQHELDLGLPPYATPAELRADLDTVDASLRAHGSALLADDRLALLREGVRVFGFHLCGLDMRQNSDVHEEVVAELLAWAGVHPDYRSLPEDERVELLAAELGTRRPLVGDRAELSELADKELGVVRAAAHAIRRYGPAAVPNYVISMCRSVSDVLEAAILLKEAGLIDASGPEPYCPVGISPLLETIEDLHNGAAILHAMLELPLYRALVAARGQSQEVMLGYSDSNKDGGYLASSWAVYRAELALVEVARKIGIRLRLFHGRGGTVGRGGGPSYEAILAQPPGAVNGSLRLTEQGEVIAAKYAEPQVAQRNLESLVAATLESTLLDVEGLGDTAEPAYAVLDEVAVLAQRAYAELVHETPGFVDYFMASTPVSEIGSLNIGSRPTSRKPTESIADLRAIPWVLAWSQSRVMLPGWYGTGSAFEQWIAAGPQSRAERVDILHDLYRRWPFFRSVLSNLAQVLAKSDLGLAAQYAELVDDAALRRRVFGKIADEHRRTIAMHKLITGQDNLLADNPALARSVFNRFPYLEPLNHLQVELLRRYRSGDDDELVQRGILLTMNGLASALRNSG.

Active-site residues include His161 and Lys593.

The protein belongs to the PEPCase type 1 family. It depends on Mg(2+) as a cofactor.

It catalyses the reaction oxaloacetate + phosphate = phosphoenolpyruvate + hydrogencarbonate. In terms of biological role, forms oxaloacetate, a four-carbon dicarboxylic acid source for the tricarboxylic acid cycle. This Mycolicibacterium paratuberculosis (strain ATCC BAA-968 / K-10) (Mycobacterium paratuberculosis) protein is Phosphoenolpyruvate carboxylase.